We begin with the raw amino-acid sequence, 227 residues long: 7-cyano-7-deazaguanine synthase (227 aa).

7-17 (LSGGLDSSTIL) provides a ligand contact to ATP. Positions 191, 199, 202, and 205 each coordinate Zn(2+).

The protein belongs to the QueC family. Requires Zn(2+) as cofactor.

It catalyses the reaction 7-carboxy-7-deazaguanine + NH4(+) + ATP = 7-cyano-7-deazaguanine + ADP + phosphate + H2O + H(+). The protein operates within purine metabolism; 7-cyano-7-deazaguanine biosynthesis. Functionally, catalyzes the ATP-dependent conversion of 7-carboxy-7-deazaguanine (CDG) to 7-cyano-7-deazaguanine (preQ(0)). In Trichormus variabilis (strain ATCC 29413 / PCC 7937) (Anabaena variabilis), this protein is 7-cyano-7-deazaguanine synthase.